Consider the following 376-residue polypeptide: Protein FhaE (376 aa).

An N-terminal signal peptide occupies residues 1–37; sequence MSQIFADRRAAVPARVISFCGAALAVWAGLAVQPAMA.

This is Protein FhaE (fhaE) from Bordetella pertussis (strain Tohama I / ATCC BAA-589 / NCTC 13251).